The chain runs to 224 residues: DeSI-like protein At4g17486 (224 aa).

Residues 26–163 (TPVYLNVYDL…FCNCLLPESI (138 aa)) enclose the PPPDE domain. Active-site residues include His-51 and Cys-125. Positions 176-201 (EFSDEDESNSEASSVSDEEGSEQHLI) are disordered.

This sequence belongs to the DeSI family.

In Arabidopsis thaliana (Mouse-ear cress), this protein is DeSI-like protein At4g17486.